Consider the following 127-residue polypeptide: Putative pre-16S rRNA nuclease (127 aa).

It belongs to the YqgF nuclease family.

The protein resides in the cytoplasm. Its function is as follows. Could be a nuclease involved in processing of the 5'-end of pre-16S rRNA. The polypeptide is Putative pre-16S rRNA nuclease (Campylobacter jejuni subsp. jejuni serotype O:6 (strain 81116 / NCTC 11828)).